The sequence spans 72 residues: Translation initiation factor IF-1 (72 aa).

Residues Met1–Lys72 form the S1-like domain.

This sequence belongs to the IF-1 family. Component of the 30S ribosomal translation pre-initiation complex which assembles on the 30S ribosome in the order IF-2 and IF-3, IF-1 and N-formylmethionyl-tRNA(fMet); mRNA recruitment can occur at any time during PIC assembly.

Its subcellular location is the cytoplasm. Functionally, one of the essential components for the initiation of protein synthesis. Stabilizes the binding of IF-2 and IF-3 on the 30S subunit to which N-formylmethionyl-tRNA(fMet) subsequently binds. Helps modulate mRNA selection, yielding the 30S pre-initiation complex (PIC). Upon addition of the 50S ribosomal subunit IF-1, IF-2 and IF-3 are released leaving the mature 70S translation initiation complex. The protein is Translation initiation factor IF-1 of Agrobacterium fabrum (strain C58 / ATCC 33970) (Agrobacterium tumefaciens (strain C58)).